A 213-amino-acid chain; its full sequence is Protein arginine N-methyltransferase SFM1 (213 aa).

Phosphoserine is present on residues Ser-204 and Ser-207.

This sequence belongs to the class IV-like SAM-binding methyltransferase superfamily. Protein arginine N-methyltransferase SFM1 family.

It is found in the cytoplasm. Its function is as follows. S-adenosyl-L-methionine-dependent protein-arginine N-methyltransferase that monomethylates ribosomal protein S3 (RPS3) at 'Arg-146'. The chain is Protein arginine N-methyltransferase SFM1 from Saccharomyces cerevisiae (strain ATCC 204508 / S288c) (Baker's yeast).